The sequence spans 133 residues: UPF0292 protein TK1411 (133 aa).

The region spanning 20–100 (EGALIVEGLR…SVDIETWKEL (81 aa)) is the Toprim domain. Glutamate 26, aspartate 69, and aspartate 71 together coordinate Mg(2+).

Belongs to the UPF0292 family. Mg(2+) is required as a cofactor.

The protein is UPF0292 protein TK1411 of Thermococcus kodakarensis (strain ATCC BAA-918 / JCM 12380 / KOD1) (Pyrococcus kodakaraensis (strain KOD1)).